A 209-amino-acid chain; its full sequence is Large ribosomal subunit protein uL3 (209 aa).

Gln-150 is modified (N5-methylglutamine).

The protein belongs to the universal ribosomal protein uL3 family. In terms of assembly, part of the 50S ribosomal subunit. Forms a cluster with proteins L14 and L19. Post-translationally, methylated by PrmB.

Its function is as follows. One of the primary rRNA binding proteins, it binds directly near the 3'-end of the 23S rRNA, where it nucleates assembly of the 50S subunit. The polypeptide is Large ribosomal subunit protein uL3 (Vibrio vulnificus (strain CMCP6)).